Here is a 187-residue protein sequence, read N- to C-terminus: UPF0340 protein SPN23F05980 (187 aa).

The protein belongs to the UPF0340 family.

In Streptococcus pneumoniae (strain ATCC 700669 / Spain 23F-1), this protein is UPF0340 protein SPN23F05980.